We begin with the raw amino-acid sequence, 275 residues long: Large ribosomal subunit protein uL2 (275 aa).

The interval 223 to 275 (AAMNANDHPHGGGEAKAGQGNPHPVTPWGVPTKGYKTRKNKRTQQFIVRDRRG) is disordered.

The protein belongs to the universal ribosomal protein uL2 family. In terms of assembly, part of the 50S ribosomal subunit. Forms a bridge to the 30S subunit in the 70S ribosome.

One of the primary rRNA binding proteins. Required for association of the 30S and 50S subunits to form the 70S ribosome, for tRNA binding and peptide bond formation. It has been suggested to have peptidyltransferase activity; this is somewhat controversial. Makes several contacts with the 16S rRNA in the 70S ribosome. The polypeptide is Large ribosomal subunit protein uL2 (Xanthomonas campestris pv. campestris (strain 8004)).